The primary structure comprises 41 residues: Large ribosomal subunit protein bL36 (41 aa).

Belongs to the bacterial ribosomal protein bL36 family.

This Bartonella henselae (strain ATCC 49882 / DSM 28221 / CCUG 30454 / Houston 1) (Rochalimaea henselae) protein is Large ribosomal subunit protein bL36.